A 343-amino-acid chain; its full sequence is Holliday junction branch migration complex subunit RuvB (343 aa).

The segment at 1-186 is large ATPase domain (RuvB-L); the sequence is MVMARKSDTL…FQIQERLEYY (186 aa). ATP-binding positions include Leu-25, Arg-26, Gly-67, Lys-70, Thr-71, Ser-72, 133-135, Arg-176, Tyr-186, and Arg-223; that span reads EDF. Thr-71 serves as a coordination point for Mg(2+). The segment at 187–257 is small ATPAse domain (RuvB-S); that stretch reads DAKALESILH…LAQKSLDRLG (71 aa). The segment at 260 to 343 is head domain (RuvB-H); it reads ASGLDSMDRK…PPPTPQGSLF (84 aa). DNA is bound by residues Arg-296, Arg-315, and Arg-320.

Belongs to the RuvB family. In terms of assembly, homohexamer. Forms an RuvA(8)-RuvB(12)-Holliday junction (HJ) complex. HJ DNA is sandwiched between 2 RuvA tetramers; dsDNA enters through RuvA and exits via RuvB. An RuvB hexamer assembles on each DNA strand where it exits the tetramer. Each RuvB hexamer is contacted by two RuvA subunits (via domain III) on 2 adjacent RuvB subunits; this complex drives branch migration. In the full resolvosome a probable DNA-RuvA(4)-RuvB(12)-RuvC(2) complex forms which resolves the HJ.

It localises to the cytoplasm. The catalysed reaction is ATP + H2O = ADP + phosphate + H(+). In terms of biological role, the RuvA-RuvB-RuvC complex processes Holliday junction (HJ) DNA during genetic recombination and DNA repair, while the RuvA-RuvB complex plays an important role in the rescue of blocked DNA replication forks via replication fork reversal (RFR). RuvA specifically binds to HJ cruciform DNA, conferring on it an open structure. The RuvB hexamer acts as an ATP-dependent pump, pulling dsDNA into and through the RuvAB complex. RuvB forms 2 homohexamers on either side of HJ DNA bound by 1 or 2 RuvA tetramers; 4 subunits per hexamer contact DNA at a time. Coordinated motions by a converter formed by DNA-disengaged RuvB subunits stimulates ATP hydrolysis and nucleotide exchange. Immobilization of the converter enables RuvB to convert the ATP-contained energy into a lever motion, pulling 2 nucleotides of DNA out of the RuvA tetramer per ATP hydrolyzed, thus driving DNA branch migration. The RuvB motors rotate together with the DNA substrate, which together with the progressing nucleotide cycle form the mechanistic basis for DNA recombination by continuous HJ branch migration. Branch migration allows RuvC to scan DNA until it finds its consensus sequence, where it cleaves and resolves cruciform DNA. This Myxococcus xanthus (strain DK1622) protein is Holliday junction branch migration complex subunit RuvB.